Consider the following 137-residue polypeptide: DNA-binding protein H-NS (137 aa).

Residues 13-65 (TLRAQARECTLETLEEMLEKLEVVVNERREEESAAAAEVEERTRKLQQYREML) are a coiled coil. A DNA-binding region spans residues 112–117 (QGRTPA).

The protein belongs to the histone-like protein H-NS family. In terms of assembly, homodimer that oligomerizes on DNA into higher-order complexes that form bridges between disparate regions of DNA compacting it. Interacts with Hha, YdgT and StpA.

It is found in the cytoplasm. Its subcellular location is the nucleoid. A DNA-binding protein implicated in transcriptional repression and chromosome organization and compaction. Binds AT-rich DNA, repressing its transcription; about 754/4438 tested genes (15%) bind to H-NS, 70% of these are AT-rich and correspond to horizontally transferred geness (HTG), thus playing a central role in silencing foreign genes. This offers the selective advantage of silencing foreign DNA. Binds nucleation sites in AT-rich DNA and bridges them, forming higher-order nucleoprotein complexes and condensing the chromosome. A subset of genes are repressed by H-NS in association with Hha and/or YdgT. The chain is DNA-binding protein H-NS (hns) from Salmonella typhimurium (strain 14028s / SGSC 2262).